A 119-amino-acid polypeptide reads, in one-letter code: MVKLAFPRELRLLTPSQFTFVFQQPQRAGTPQITILGRLNSLGHPRIGLTVAKKNVRRAHERNRIKRLTRESFRLRQHELPAMDFVVVAKKGVADLDNRALSEALEKLWRRHCRLARGS.

This sequence belongs to the RnpA family. As to quaternary structure, consists of a catalytic RNA component (M1 or rnpB) and a protein subunit.

It catalyses the reaction Endonucleolytic cleavage of RNA, removing 5'-extranucleotides from tRNA precursor.. Its function is as follows. RNaseP catalyzes the removal of the 5'-leader sequence from pre-tRNA to produce the mature 5'-terminus. It can also cleave other RNA substrates such as 4.5S RNA. The protein component plays an auxiliary but essential role in vivo by binding to the 5'-leader sequence and broadening the substrate specificity of the ribozyme. The chain is Ribonuclease P protein component from Escherichia fergusonii (strain ATCC 35469 / DSM 13698 / CCUG 18766 / IAM 14443 / JCM 21226 / LMG 7866 / NBRC 102419 / NCTC 12128 / CDC 0568-73).